We begin with the raw amino-acid sequence, 311 residues long: Porphobilinogen deaminase (311 aa).

Position 240 is an S-(dipyrrolylmethanemethyl)cysteine (C240).

The protein belongs to the HMBS family. Monomer. Dipyrromethane serves as cofactor.

The enzyme catalyses 4 porphobilinogen + H2O = hydroxymethylbilane + 4 NH4(+). Its pathway is porphyrin-containing compound metabolism; protoporphyrin-IX biosynthesis; coproporphyrinogen-III from 5-aminolevulinate: step 2/4. Its function is as follows. Tetrapolymerization of the monopyrrole PBG into the hydroxymethylbilane pre-uroporphyrinogen in several discrete steps. The chain is Porphobilinogen deaminase from Natranaerobius thermophilus (strain ATCC BAA-1301 / DSM 18059 / JW/NM-WN-LF).